The following is a 29-amino-acid chain: Neurotoxin BmK A3-6 (29 aa).

In terms of processing, contains 3 disulfide bonds. Expressed by the venom gland.

The protein localises to the secreted. The chain is Neurotoxin BmK A3-6 from Olivierus martensii (Manchurian scorpion).